Consider the following 577-residue polypeptide: Arginine--tRNA ligase (577 aa).

A 'HIGH' region motif is present at residues 122–132 (PNVAKEMHVGH).

This sequence belongs to the class-I aminoacyl-tRNA synthetase family. Monomer.

Its subcellular location is the cytoplasm. The catalysed reaction is tRNA(Arg) + L-arginine + ATP = L-arginyl-tRNA(Arg) + AMP + diphosphate. This Vibrio parahaemolyticus serotype O3:K6 (strain RIMD 2210633) protein is Arginine--tRNA ligase.